We begin with the raw amino-acid sequence, 856 residues long: Dual specificity protein kinase TTK (856 aa).

The residue at position 1 (Met1) is an N-acetylmethionine. Position 7 is a phosphoserine (Ser7). Thr33 carries the phosphothreonine modification. A phosphoserine mark is found at Ser37, Ser80, Ser281, Ser317, and Ser321. Thr360 is modified (phosphothreonine). At Ser363 the chain carries Phosphoserine. Residues 369–392 are disordered; it reads EETKEYQEPEVPESNQKQWQSKRK. Phosphoserine occurs at positions 393, 435, and 454. The region spanning 524 to 790 is the Protein kinase domain; sequence YSILKQIGSG…IPELLAHPYV (267 aa). Residues 530–538 and Lys552 contribute to the ATP site; that span reads IGSGGSSKV. The active-site Proton acceptor is Asp646. At Ser820 the chain carries Phosphoserine. Over residues 835-846 the composition is skewed to low complexity; the sequence is YSGGESHNSSSS. The disordered stretch occupies residues 835 to 856; that stretch reads YSGGESHNSSSSKTFGKKREKK.

It belongs to the protein kinase superfamily. Ser/Thr protein kinase family. As to quaternary structure, interacts with TPR; the interactions occurs in a microtubule-independent manner. Interacts with MAD1L1 and MAD2L1.

The catalysed reaction is L-seryl-[protein] + ATP = O-phospho-L-seryl-[protein] + ADP + H(+). It catalyses the reaction L-threonyl-[protein] + ATP = O-phospho-L-threonyl-[protein] + ADP + H(+). The enzyme catalyses L-tyrosyl-[protein] + ATP = O-phospho-L-tyrosyl-[protein] + ADP + H(+). With respect to regulation, inhibited by the ATP-competitive kinase inhibitor, SP600125. Functionally, involved in mitotic spindle assembly checkpoint signaling, a process that delays anaphase until chromosomes are bioriented on the spindle, and in the repair of incorrect mitotic kinetochore-spindle microtubule attachments. Phosphorylates MAD1L1 to promote the mitotic spindle assembly checkpoint. Phosphorylates CDCA8/Borealin leading to enhanced AURKB activity at the kinetochore. Phosphorylates SKA3 at 'Ser-34' leading to dissociation of the SKA complex from microtubules and destabilization of microtubule-kinetochore attachments. Phosphorylates KNL1, KNTC1 and autophosphorylates. Phosphorylates MCRS1 which enhances recruitment of KIF2A to the minus end of spindle microtubules and promotes chromosome alignment. This Macaca fascicularis (Crab-eating macaque) protein is Dual specificity protein kinase TTK (TTK).